The chain runs to 177 residues: 18.9 kDa heat shock protein (177 aa).

Residues Met1 to Pro35 are disordered. The span at Lys17–Glu32 shows a compositional bias: gly residues. Residues Ala63–Asn177 form the sHSP domain.

It belongs to the small heat shock protein (HSP20) family. In terms of assembly, may form oligomeric structures.

The protein localises to the cytoplasm. This is 18.9 kDa heat shock protein (HSP18.9) from Oryza sativa subsp. japonica (Rice).